A 57-amino-acid chain; its full sequence is MAVPKKKTSKSKRDKRRATWRHKAAVEAQKALSLGKSILTGRSTFVYPTAEEEDEEE.

The disordered stretch occupies residues 1 to 23 (MAVPKKKTSKSKRDKRRATWRHK).

The protein belongs to the bacterial ribosomal protein bL32 family.

This chain is Large ribosomal subunit protein bL32, found in Trichormus variabilis (strain ATCC 29413 / PCC 7937) (Anabaena variabilis).